We begin with the raw amino-acid sequence, 478 residues long: Lipoprotein lipase (478 aa).

Residues 1–27 form the signal peptide; the sequence is MESKALLLVALSVWLQSLIVSREGLAT. The interaction with GPIHBP1 stretch occupies residues 35-56; sequence RDFTDIESKFALRTPEDTVEDT. Cysteine 57 and cysteine 70 form a disulfide bridge. Asparagine 73 carries N-linked (GlcNAc...) asparagine glycosylation. Residue tyrosine 124 is modified to 3'-nitrotyrosine. Residue serine 162 is the Nucleophile of the active site. The active-site Charge relay system is aspartate 186. Tyrosine 194 carries the 3'-nitrotyrosine modification. Positions 197, 200, 202, and 205 each coordinate Ca(2+). A disulfide bond links cysteine 246 and cysteine 269. The tract at residues 246 to 269 is essential for determining substrate specificity; the sequence is CNIGEAIRVIAERGLGDVDQLVKC. Residue histidine 271 is the Charge relay system of the active site. Cystine bridges form between cysteine 294-cysteine 313 and cysteine 305-cysteine 308. The PLAT domain maps to 344 to 467; it reads FHYQVKMRFS…KGKSSVVFVK (124 aa). Tyrosine 346 is modified (3'-nitrotyrosine). Asparagine 389 is a glycosylation site (N-linked (GlcNAc...) asparagine). An important for interaction with lipoprotein particles region spans residues 420-424; sequence WSNWW. Residues 433–437 are important for heparin binding; that stretch reads KIRVK. The interval 446-470 is interaction with GPIHBP1; the sequence is IFCSREKKSHLQKGKSSVVFVKCHD. A disulfide bond links cysteine 448 and cysteine 468.

Belongs to the AB hydrolase superfamily. Lipase family. As to quaternary structure, homodimer. Interacts with GPIHBP1 with 1:1 stoichiometry. Interacts with APOC2; the interaction activates LPL activity in the presence of lipids. Interaction with heparan sulfate proteoglycans is required to protect LPL against loss of activity. Associates with lipoprotein particles in blood plasma. Interacts with LMF1 and SEL1L; interaction with SEL1L is required to prevent aggregation of newly synthesized LPL in the endoplasmic reticulum (ER), and for normal export of LPL from the ER to the extracellular space. Interacts with SORL1; SORL1 acts as a sorting receptor, promoting LPL localization to endosomes and later to lysosomes, leading to degradation of newly synthesized LPL. Post-translationally, tyrosine nitration after lipopolysaccharide (LPS) challenge down-regulates the lipase activity.

The protein resides in the cell membrane. It localises to the secreted. The protein localises to the extracellular space. It is found in the extracellular matrix. The catalysed reaction is a triacylglycerol + H2O = a diacylglycerol + a fatty acid + H(+). It carries out the reaction a 1,2-diacyl-sn-glycero-3-phosphocholine + H2O = a 2-acyl-sn-glycero-3-phosphocholine + a fatty acid + H(+). The enzyme catalyses 1,2,3-tri-(9Z-octadecenoyl)-glycerol + H2O = di-(9Z)-octadecenoylglycerol + (9Z)-octadecenoate + H(+). It catalyses the reaction 1,2-di-(9Z-octadecenoyl)-sn-glycero-3-phosphocholine + H2O = (9Z-octadecenoyl)-sn-glycero-3-phosphocholine + (9Z)-octadecenoate + H(+). The catalysed reaction is 1,2,3-tributanoylglycerol + H2O = dibutanoylglycerol + butanoate + H(+). It carries out the reaction 1,2-dihexadecanoyl-sn-glycero-3-phosphocholine + H2O = hexadecanoyl-sn-glycero-3-phosphocholine + hexadecanoate + H(+). With respect to regulation, the apolipoprotein APOC2 acts as a coactivator of LPL activity. Ca(2+) binding promotes protein stability and formation of the active homodimer. Interaction with GPIHBP1 protects LPL against inactivation by ANGPTL4. Functionally, key enzyme in triglyceride metabolism. Catalyzes the hydrolysis of triglycerides from circulating chylomicrons and very low density lipoproteins (VLDL), and thereby plays an important role in lipid clearance from the blood stream, lipid utilization and storage. Although it has both phospholipase and triglyceride lipase activities it is primarily a triglyceride lipase with low but detectable phospholipase activity. Mediates margination of triglyceride-rich lipoprotein particles in capillaries. Recruited to its site of action on the luminal surface of vascular endothelium by binding to GPIHBP1 and cell surface heparan sulfate proteoglycans. The chain is Lipoprotein lipase (LPL) from Sus scrofa (Pig).